Consider the following 390-residue polypeptide: Heparan sulfate glucosamine 3-O-sulfotransferase 3B1 (390 aa).

Positions 1-25 are disordered; it reads MGQRLSGGRSCLDVPGRFLPQPPPP. Residues 1–32 are Cytoplasmic-facing; sequence MGQRLSGGRSCLDVPGRFLPQPPPPPPPVRRK. The helical; Signal-anchor for type II membrane protein transmembrane segment at 33 to 53 threads the bilayer; it reads LALLFAMLCIWLYMFLYSCAG. Over 54-390 the chain is Lumenal; that stretch reads SCTAAPGLLL…QMTGRDFGWD (337 aa). The disordered stretch occupies residues 79–125; the sequence is TAPNETSPKMPFRAPPANSLAAGKDKTVGAGSQEEQSPEAPDSPSPI. Residue asparagine 82 is glycosylated (N-linked (GlcNAc...) asparagine). 147 to 151 serves as a coordination point for 3'-phosphoadenylyl sulfate; it reads KGGTR. Residues 169-175 and 200-203 each bind substrate; these read EPHFFDR and KTPS. 2 residues coordinate 3'-phosphoadenylyl sulfate: arginine 228 and serine 236. The N-linked (GlcNAc...) asparagine glycan is linked to asparagine 258. Position 268–269 (268–269) interacts with substrate; it reads WS. N-linked (GlcNAc...) asparagine glycosylation is present at asparagine 329. Cysteines 336 and 348 form a disulfide. 353-357 contacts 3'-phosphoadenylyl sulfate; the sequence is KGRAH.

The protein belongs to the sulfotransferase 1 family.

Its subcellular location is the golgi apparatus membrane. It carries out the reaction alpha-D-glucosaminyl-[heparan sulfate](n) + 3'-phosphoadenylyl sulfate = 3-sulfo-alpha-D-glucosaminyl-[heparan sulfate](n) + adenosine 3',5'-bisphosphate + H(+). Its function is as follows. Sulfotransferase that utilizes 3'-phospho-5'-adenylyl sulfate (PAPS) to catalyze the transfer of a sulfo group to an N-unsubstituted glucosamine linked to a 2-O-sulfo iduronic acid unit on heparan sulfate. Catalyzes the O-sulfation of glucosamine in IdoUA2S-GlcNS and also in IdoUA2S-GlcNH2. Unlike HS3ST1/3-OST-1, does not convert non-anticoagulant heparan sulfate to anticoagulant heparan sulfate. This is Heparan sulfate glucosamine 3-O-sulfotransferase 3B1 (Hs3st3b1) from Mus musculus (Mouse).